The following is a 473-amino-acid chain: Fumarate hydratase class II (473 aa).

Substrate-binding positions include 104-106 (SGT), 128-131 (HPND), 138-140 (SSN), and Thr-186. The active-site Proton donor/acceptor is the His-187. Ser-318 is a catalytic residue. Residues Ser-319 and 324–326 (KVN) each bind substrate.

This sequence belongs to the class-II fumarase/aspartase family. Fumarase subfamily. Homotetramer.

It is found in the cytoplasm. The enzyme catalyses (S)-malate = fumarate + H2O. It functions in the pathway carbohydrate metabolism; tricarboxylic acid cycle; (S)-malate from fumarate: step 1/1. Functionally, involved in the TCA cycle. Catalyzes the stereospecific interconversion of fumarate to L-malate. The chain is Fumarate hydratase class II from Corynebacterium efficiens (strain DSM 44549 / YS-314 / AJ 12310 / JCM 11189 / NBRC 100395).